The sequence spans 723 residues: MSTATGPEAAPKPSAKSIYEQRKRYSTVVMADVSQYPVNHLVTFCLGEDDGVHTVEDASRKLAVMDSQGRVWAQEMLLRVSPDHVTLLDPASKEELESYPLGAIVRCDAVMPPGRSRSLLLLVCQEPERAQPDVHFFQGLRLGAELIREDIQGALHNYRSGRGERRAAALRATQEELQRDRSPAAETPPLQRRPSVRAVISTVERGAGRGRPQAKPIPEAEEAQRPEPVGTSSNADSASPDLGPRGPDLAVLQAEREVDILNHVFDDVESFVSRLQKSAEAARVLEHRERGRRSRRRAAGEGLLTLRAKPPSEAEYTDVLQKIKYAFSLLARLRGNIADPSSPELLHFLFGPLQMIVNTSGGPEFASSVRRPHLTSDAVALLRDNVTPRENELWTSLGDSWTRPGLELSPEEGPPYRPEFFSGWEPPVTDPQSRAWEDPVEKQLQHERRRRQQSAPQVAVNGHRDLEPESEPQLESETAGKWVLCNYDFQARNSSELSVKQRDVLEVLDDSRKWWKVRDPAGQEGYVPYNILTPYPGPRLHHSQSPARSLNSTPPPPPAPAPAPPPALARPRWDRPRWDSCDSLNGLDPSEKEKFSQMLIVNEELQARLAQGRSGPSRAVPGPRAPEPQLSPGSDASEVRAWLQAKGFSSGTVDALGVLTGAQLFSLQKEELRAVSPEEGARVYSQVTVQRSLLEDKEKVSELEAVMEKQKKKVEGEVEMEVI.

The PTB domain occupies 35 to 164 (QYPVNHLVTF…LHNYRSGRGE (130 aa)). Residues 162–183 (RGERRAAALRATQEELQRDRSP) show a composition bias toward basic and acidic residues. Disordered stretches follow at residues 162-247 (RGER…PRGP), 442-477 (KQLQHERRRRQQSAPQVAVNGHRDLEPESEPQLESE), 537-589 (GPRL…GLDP), and 609-636 (LAQGRSGPSRAVPGPRAPEPQLSPGSDA). A Phosphoserine modification is found at S182. T187 bears the Phosphothreonine mark. The region spanning 478-537 (TAGKWVLCNYDFQARNSSELSVKQRDVLEVLDDSRKWWKVRDPAGQEGYVPYNILTPYPG) is the SH3 domain. Polar residues predominate over residues 543-552 (SQSPARSLNS). Pro residues predominate over residues 553–568 (TPPPPPAPAPAPPPAL). The span at 571–580 (PRWDRPRWDS) shows a compositional bias: basic and acidic residues. Positions 689 to 719 (VQRSLLEDKEKVSELEAVMEKQKKKVEGEVE) form a coiled coil.

This sequence belongs to the EPS8 family. As to quaternary structure, interacts with ABI1. Part of a complex that contains SOS1, ABI1 and EPS8L2. Associates with F-actin. Detected in placenta.

It localises to the cytoplasm. Its function is as follows. Stimulates guanine exchange activity of SOS1. May play a role in membrane ruffling and remodeling of the actin cytoskeleton. This chain is Epidermal growth factor receptor kinase substrate 8-like protein 1 (EPS8L1), found in Homo sapiens (Human).